The sequence spans 318 residues: L-malyl-CoA/beta-methylmalyl-CoA lyase (318 aa).

Positions 19, 24, 30, and 76 each coordinate substrate. Mg(2+)-binding residues include glutamate 141 and aspartate 168. Substrate contacts are provided by residues alanine 167–aspartate 168 and isoleucine 251–histidine 252.

This sequence belongs to the HpcH/HpaI aldolase family. Homohexamer. Dimer of trimers. Requires Mg(2+) as cofactor. The cofactor is Mn(2+).

The catalysed reaction is (S)-malyl-CoA = glyoxylate + acetyl-CoA. It catalyses the reaction (2R,3S)-beta-methylmalyl-CoA = propanoyl-CoA + glyoxylate. Functionally, involved in the ethylmalonyl-CoA pathway for acetate assimilation. Catalyzes the reversible condensation of glyoxylate and acetyl-CoA to L-malyl-CoA and the reversible condensation of glyoxylate and propionyl-CoA to yield beta-methylmalyl-CoA. This Cereibacter sphaeroides (strain ATCC 17029 / ATH 2.4.9) (Rhodobacter sphaeroides) protein is L-malyl-CoA/beta-methylmalyl-CoA lyase.